The following is a 160-amino-acid chain: Troponin C, skeletal muscle (160 aa).

4 consecutive EF-hand domains span residues 15–50 (EMIA…LGQN), 51–86 (PTRE…QLKE), 91–126 (KSEE…SGEP), and 127–160 (VSEE…ENIQ). Residues Asp-28, Asp-30, Asp-34, Glu-39, Asp-64, Asp-66, Ser-68, Thr-70, Glu-75, Asp-104, Asn-106, Asp-108, Glu-115, Asp-140, Asn-142, Asp-144, Lys-146, and Glu-151 each contribute to the Ca(2+) site.

It belongs to the troponin C family.

Its function is as follows. Troponin is the central regulatory protein of striated muscle contraction. Tn consists of three components: Tn-I which is the inhibitor of actomyosin ATPase, Tn-T which contains the binding EF-hand for tropomyosin and Tn-C. The binding of calcium to Tn-C abolishes the inhibitory action of Tn on actin filaments. This is Troponin C, skeletal muscle from Anguilla anguilla (European freshwater eel).